Here is a 222-residue protein sequence, read N- to C-terminus: Methylthioribulose-1-phosphate dehydratase (222 aa).

Residues histidine 94 and histidine 96 each contribute to the Zn(2+) site.

The protein belongs to the aldolase class II family. MtnB subfamily. The cofactor is Zn(2+).

It catalyses the reaction 5-(methylsulfanyl)-D-ribulose 1-phosphate = 5-methylsulfanyl-2,3-dioxopentyl phosphate + H2O. Its pathway is amino-acid biosynthesis; L-methionine biosynthesis via salvage pathway; L-methionine from S-methyl-5-thio-alpha-D-ribose 1-phosphate: step 2/6. Functionally, catalyzes the dehydration of methylthioribulose-1-phosphate (MTRu-1-P) into 2,3-diketo-5-methylthiopentyl-1-phosphate (DK-MTP-1-P). In Yersinia pseudotuberculosis serotype O:1b (strain IP 31758), this protein is Methylthioribulose-1-phosphate dehydratase.